Here is a 322-residue protein sequence, read N- to C-terminus: TATA box-binding protein-associated factor RNA polymerase I subunit D (322 aa).

Disordered stretches follow at residues 1 to 70 (MAQS…SIEP) and 82 to 116 (FKKK…RITR). Ser-23 is subject to Phosphoserine. Over residues 82–107 (FKKKKRKKRKKRKYEPKLRPRGRPRG) the composition is skewed to basic residues. Ser-137 is subject to Phosphoserine. The interval 198–219 (YMDDDGSLSPIEEPLTEDEATN) is disordered. Phosphoserine is present on Ser-232. A compositionally biased stretch (basic and acidic residues) spans 257–267 (FSKKAKDATHR). The interval 257 to 276 (FSKKAKDATHREKGHRRTLK) is disordered.

In terms of assembly, component of the transcription factor SL1/TIF-IB complex, composed of TBP and at least TAF1A, TAF1B, TAF1C and TAF1D. Interacts with UBTF.

Its subcellular location is the nucleus. Functionally, component of the transcription factor SL1/TIF-IB complex, which is involved in the assembly of the PIC (preinitiation complex) during RNA polymerase I-dependent transcription. The rate of PIC formation probably is primarily dependent on the rate of association of SL1/TIF-IB with the rDNA promoter. SL1/TIF-IB is involved in stabilization of nucleolar transcription factor 1/UBTF on rDNA. Formation of SL1/TIF-IB excludes the association of TBP with TFIID subunits. This is TATA box-binding protein-associated factor RNA polymerase I subunit D (Taf1d) from Mus musculus (Mouse).